Here is a 355-residue protein sequence, read N- to C-terminus: uncharacterized protein (355 aa).

It belongs to the carbohydrate kinase PfkB family.

This is an uncharacterized protein from Dictyostelium discoideum (Social amoeba).